The chain runs to 334 residues: tRNA U34 carboxymethyltransferase (334 aa).

Carboxy-S-adenosyl-L-methionine-binding positions include K91, W105, K110, G130, D152–T154, I181–E182, M196, Y200, and R315.

It belongs to the class I-like SAM-binding methyltransferase superfamily. CmoB family. In terms of assembly, homotetramer.

The enzyme catalyses carboxy-S-adenosyl-L-methionine + 5-hydroxyuridine(34) in tRNA = 5-carboxymethoxyuridine(34) in tRNA + S-adenosyl-L-homocysteine + H(+). Functionally, catalyzes carboxymethyl transfer from carboxy-S-adenosyl-L-methionine (Cx-SAM) to 5-hydroxyuridine (ho5U) to form 5-carboxymethoxyuridine (cmo5U) at position 34 in tRNAs. This Klebsiella pneumoniae (strain 342) protein is tRNA U34 carboxymethyltransferase.